A 511-amino-acid chain; its full sequence is Maturase K (511 aa).

It belongs to the intron maturase 2 family. MatK subfamily.

Its subcellular location is the plastid. It localises to the chloroplast. In terms of biological role, usually encoded in the trnK tRNA gene intron. Probably assists in splicing its own and other chloroplast group II introns. The sequence is that of Maturase K from Triticum aestivum (Wheat).